The primary structure comprises 312 residues: MESALPAAGFLYWVGAGTVAYLALRISYSLFTALRVWGVGNEAGVGPGLGEWAVVTGSTDGIGKSYAEELAKHGMKVVLISRSKDKLDQVSSEIKEKFKVETRTIAVDFASEDIYDKIKTGLAGLEIGILVNNVGMSYEYPEYFLDVPDLDNVIKKMININILSVCKMTQLVLPGMVERSKGAILNISSGSGMLPVPLLTIYSATKTFVDFFSQCLHEEYRSKGVFVQSVLPYFVATKLAKIRKPTLDKPSPETFVKSAIKTVGLQSRTNGYLIHALMGSIISNLPSWIYLKIVMNMNKSTRAHYLKKTKKN.

A helical membrane pass occupies residues 4–24 (ALPAAGFLYWVGAGTVAYLAL). 50–79 (GEWAVVTGSTDGIGKSYAEELAKHGMKVVL) is a binding site for NADP(+). Helical transmembrane passes span 182 to 202 (GAIL…LTIY) and 271 to 291 (GYLI…WIYL). S189 is a binding site for substrate. The active-site Proton acceptor is Y202. The Di-lysine motif signature appears at 308-312 (KTKKN).

It belongs to the short-chain dehydrogenases/reductases (SDR) family. 17-beta-HSD 3 subfamily. As to quaternary structure, interacts with ELOVL1 and LASS2. Expressed in most tissues tested. Highly expressed in the ovary and mammary. Expressed in platelets.

The protein resides in the endoplasmic reticulum membrane. The enzyme catalyses a very-long-chain (3R)-3-hydroxyacyl-CoA + NADP(+) = a very-long-chain 3-oxoacyl-CoA + NADPH + H(+). The catalysed reaction is 17beta-estradiol + NAD(+) = estrone + NADH + H(+). It carries out the reaction 17beta-estradiol + NADP(+) = estrone + NADPH + H(+). It catalyses the reaction 3-oxooctadecanoyl-CoA + NADPH + H(+) = (3R)-hydroxyoctadecanoyl-CoA + NADP(+). The enzyme catalyses (7Z,10Z,13Z,16Z)-3-oxodocosatetraenoyl-CoA + NADPH + H(+) = (3R)-hydroxy-(7Z,10Z,13Z,16Z)-docosatetraenoyl-CoA + NADP(+). The catalysed reaction is 3-oxo-(7Z,10Z,13Z,16Z,19Z)-docosapentaenoyl-CoA + NADPH + H(+) = (3R)-hydroxy-(7Z,10Z,13Z,16Z,19Z)-docosapentaenoyl-CoA + NADP(+). It carries out the reaction (8Z,11Z,14Z)-3-oxoeicosatrienoyl-CoA + NADPH + H(+) = (3R)-hydroxy-(8Z,11Z,14Z)-eicosatrienoyl-CoA + NADP(+). Its pathway is lipid metabolism; fatty acid biosynthesis. It participates in steroid biosynthesis; estrogen biosynthesis. Its function is as follows. Catalyzes the second of the four reactions of the long-chain fatty acids elongation cycle. This endoplasmic reticulum-bound enzymatic process, allows the addition of two carbons to the chain of long- and very long-chain fatty acids/VLCFAs per cycle. This enzyme has a 3-ketoacyl-CoA reductase activity, reducing 3-ketoacyl-CoA to 3-hydroxyacyl-CoA, within each cycle of fatty acid elongation. Thereby, it may participate in the production of VLCFAs of different chain lengths that are involved in multiple biological processes as precursors of membrane lipids and lipid mediators. May also catalyze the transformation of estrone (E1) into estradiol (E2) and play a role in estrogen formation. This is Very-long-chain 3-oxoacyl-CoA reductase from Homo sapiens (Human).